We begin with the raw amino-acid sequence, 417 residues long: Serine hydroxymethyltransferase (417 aa).

Residues leucine 121 and glycine 125 to leucine 127 each bind (6S)-5,6,7,8-tetrahydrofolate. Residue lysine 229 is modified to N6-(pyridoxal phosphate)lysine. Position 355–357 (serine 355–phenylalanine 357) interacts with (6S)-5,6,7,8-tetrahydrofolate.

Belongs to the SHMT family. Homodimer. Requires pyridoxal 5'-phosphate as cofactor.

The protein localises to the cytoplasm. It carries out the reaction (6R)-5,10-methylene-5,6,7,8-tetrahydrofolate + glycine + H2O = (6S)-5,6,7,8-tetrahydrofolate + L-serine. The protein operates within one-carbon metabolism; tetrahydrofolate interconversion. It participates in amino-acid biosynthesis; glycine biosynthesis; glycine from L-serine: step 1/1. Catalyzes the reversible interconversion of serine and glycine with tetrahydrofolate (THF) serving as the one-carbon carrier. This reaction serves as the major source of one-carbon groups required for the biosynthesis of purines, thymidylate, methionine, and other important biomolecules. Also exhibits THF-independent aldolase activity toward beta-hydroxyamino acids, producing glycine and aldehydes, via a retro-aldol mechanism. In Aeromonas hydrophila subsp. hydrophila (strain ATCC 7966 / DSM 30187 / BCRC 13018 / CCUG 14551 / JCM 1027 / KCTC 2358 / NCIMB 9240 / NCTC 8049), this protein is Serine hydroxymethyltransferase.